Here is a 262-residue protein sequence, read N- to C-terminus: Hydroxyethylthiazole kinase (262 aa).

Residue M44 coordinates substrate. The ATP site is built by R118 and S166. A substrate-binding site is contributed by G193.

The protein belongs to the Thz kinase family. Mg(2+) serves as cofactor.

It carries out the reaction 5-(2-hydroxyethyl)-4-methylthiazole + ATP = 4-methyl-5-(2-phosphooxyethyl)-thiazole + ADP + H(+). It participates in cofactor biosynthesis; thiamine diphosphate biosynthesis; 4-methyl-5-(2-phosphoethyl)-thiazole from 5-(2-hydroxyethyl)-4-methylthiazole: step 1/1. In terms of biological role, catalyzes the phosphorylation of the hydroxyl group of 4-methyl-5-beta-hydroxyethylthiazole (THZ). This chain is Hydroxyethylthiazole kinase, found in Chlamydia abortus (strain DSM 27085 / S26/3) (Chlamydophila abortus).